The primary structure comprises 674 residues: Methionine--tRNA ligase (674 aa).

The short motif at 11–21 (PYANGDLHLGH) is the 'HIGH' region element. 4 residues coordinate Zn(2+): cysteine 142, cysteine 145, cysteine 155, and cysteine 158. A 'KMSKS' region motif is present at residues 330 to 334 (KMSKS). Lysine 333 is a binding site for ATP. The 101-residue stretch at 574-674 (DFMKVDLRIA…EGAQPGMRVK (101 aa)) folds into the tRNA-binding domain.

It belongs to the class-I aminoacyl-tRNA synthetase family. MetG type 1 subfamily. Homodimer. Zn(2+) is required as a cofactor.

The protein resides in the cytoplasm. It catalyses the reaction tRNA(Met) + L-methionine + ATP = L-methionyl-tRNA(Met) + AMP + diphosphate. In terms of biological role, is required not only for elongation of protein synthesis but also for the initiation of all mRNA translation through initiator tRNA(fMet) aminoacylation. In Francisella tularensis subsp. holarctica (strain FTNF002-00 / FTA), this protein is Methionine--tRNA ligase.